The sequence spans 288 residues: Ribosomal RNA small subunit methyltransferase A (288 aa).

Positions 28, 30, 55, 76, 101, and 130 each coordinate S-adenosyl-L-methionine.

This sequence belongs to the class I-like SAM-binding methyltransferase superfamily. rRNA adenine N(6)-methyltransferase family. RsmA subfamily.

The protein resides in the cytoplasm. It catalyses the reaction adenosine(1518)/adenosine(1519) in 16S rRNA + 4 S-adenosyl-L-methionine = N(6)-dimethyladenosine(1518)/N(6)-dimethyladenosine(1519) in 16S rRNA + 4 S-adenosyl-L-homocysteine + 4 H(+). Functionally, specifically dimethylates two adjacent adenosines (A1518 and A1519) in the loop of a conserved hairpin near the 3'-end of 16S rRNA in the 30S particle. May play a critical role in biogenesis of 30S subunits. This Moorella thermoacetica (strain ATCC 39073 / JCM 9320) protein is Ribosomal RNA small subunit methyltransferase A.